The sequence spans 109 residues: Sperm-specific class P protein 10 (109 aa).

Residues 2 to 109 form the MSP domain; sequence SLTADPPACT…TVTIPMSATA (108 aa).

In terms of tissue distribution, expressed at higher level in testis.

In Caenorhabditis elegans, this protein is Sperm-specific class P protein 10 (ssp-10).